Here is a 437-residue protein sequence, read N- to C-terminus: Carboxypeptidase A6 (437 aa).

The first 30 residues, 1–30, serve as a signal peptide directing secretion; that stretch reads MKCLGKRRGQAAAFLPLCWLFLKILQPGHS. A propeptide spans 31-129 (activation peptide); sequence HLYNNRYAGD…SSLHTQRNRR (99 aa). 2 N-linked (GlcNAc...) asparagine glycosylation sites follow: N89 and N153. One can recognise a Peptidase M14 domain in the interval 138–432; sequence VYHSLEEIQN…LAVKNITMHL (295 aa). Residues H196 and E199 each contribute to the Zn(2+) site. Substrate is bound by residues 196 to 199, R254, and 271 to 272; these read HARE and NR. A disulfide bond links C265 and C288. Position 324 (H324) interacts with Zn(2+). Substrate-binding positions include 325 to 326 and Y376; that span reads AY. Catalysis depends on E398, which acts as the Proton donor/acceptor. N427 carries an N-linked (GlcNAc...) asparagine glycan.

This sequence belongs to the peptidase M14 family. Requires Zn(2+) as cofactor. Expressed in the hippocampus, nucleus raphe, and cortex.

The protein resides in the secreted. It is found in the extracellular space. Its subcellular location is the extracellular matrix. May be involved in the proteolytic inactivation of enkephalins and neurotensin in some brain areas. May convert inactive angiotensin I into the biologically active angiotensin II. Releases a C-terminal amino acid, with preference for large hydrophobic C-terminal amino acids and shows only very weak activity toward small amino acids and histidine. In Homo sapiens (Human), this protein is Carboxypeptidase A6 (CPA6).